The sequence spans 243 residues: 2,3-bisphosphoglycerate-dependent phosphoglycerate mutase (243 aa).

Substrate is bound by residues 8-15 (RHGQSEWN), 21-22 (TG), arginine 60, 87-90 (ERHY), lysine 98, 114-115 (RR), and 183-184 (GN). Histidine 9 functions as the Tele-phosphohistidine intermediate in the catalytic mechanism. The active-site Proton donor/acceptor is glutamate 87.

This sequence belongs to the phosphoglycerate mutase family. BPG-dependent PGAM subfamily.

The catalysed reaction is (2R)-2-phosphoglycerate = (2R)-3-phosphoglycerate. Its pathway is carbohydrate degradation; glycolysis; pyruvate from D-glyceraldehyde 3-phosphate: step 3/5. Its function is as follows. Catalyzes the interconversion of 2-phosphoglycerate and 3-phosphoglycerate. The sequence is that of 2,3-bisphosphoglycerate-dependent phosphoglycerate mutase from Clostridium acetobutylicum (strain ATCC 824 / DSM 792 / JCM 1419 / IAM 19013 / LMG 5710 / NBRC 13948 / NRRL B-527 / VKM B-1787 / 2291 / W).